A 419-amino-acid chain; its full sequence is S-adenosylmethionine synthase (419 aa).

An ATP-binding site is contributed by H15. D17 provides a ligand contact to Mg(2+). K(+) is bound at residue E43. 2 residues coordinate L-methionine: E56 and Q100. The flexible loop stretch occupies residues 100-110 (QSPDIAQGVNE). Residues 171–173 (DGK), 248–249 (KF), D257, 263–264 (RK), A280, and K284 each bind ATP. Position 257 (D257) interacts with L-methionine. K288 provides a ligand contact to L-methionine.

Belongs to the AdoMet synthase family. In terms of assembly, homotetramer; dimer of dimers. It depends on Mg(2+) as a cofactor. K(+) serves as cofactor.

The protein resides in the cytoplasm. The catalysed reaction is L-methionine + ATP + H2O = S-adenosyl-L-methionine + phosphate + diphosphate. Its pathway is amino-acid biosynthesis; S-adenosyl-L-methionine biosynthesis; S-adenosyl-L-methionine from L-methionine: step 1/1. In terms of biological role, catalyzes the formation of S-adenosylmethionine (AdoMet) from methionine and ATP. The overall synthetic reaction is composed of two sequential steps, AdoMet formation and the subsequent tripolyphosphate hydrolysis which occurs prior to release of AdoMet from the enzyme. The protein is S-adenosylmethionine synthase of Prochlorococcus marinus (strain MIT 9313).